Consider the following 750-residue polypeptide: MIIRSPEPEVKILVDRDHIKTSFEEWARPGHFSRTIAKGPDTTTWIWNLHADAHDFDSHTSDLEEISRKVFSAHFGQLSIIFLWLSGMYFHGARFSNYEAWLSDPTHIGPSAQVVWPIVGQEILNGDVGGGFRGIQITSGFFQIWRASGITSELQLYCTAIGALVFAALMLFAGWFHYHKAAPKLAWFQDVESMLNHHLAGLLGLGSLSWAGHQVHVSLPINQFLNAGVDPKEIPLPHEFILNRELLAQLYPSFAEGATPFFTLNWSKYAEFLSFHGGLDPVTGGLWLTDIAHHHLAIAILFLIAGHMYRTNWGIGHGLKDILEAHKGPFTGQGHKGLYEILTTSWHAQLSLNLAMLGSLTIVVAHHMYSMPPYPYLATDYGTQLSLFTHHMWIGGFLIVGAAAHAAIFMVRDYDPTTRYNDLLDRVLRHRDAIISHLNWACIFLGFHSFGLYIHNDTMSALGRPQDMFSDTAIQLQPVFAQWIQNTHALAPGATAPGATASTSLTWGGGDLVAVGGKVALLPIPLGTADFLVHHIHAFTIHVTVLILLKGVLFARSSRLIPDKANLGFRFPCDGPGRGGTCQVSAWDHVFLGLFWMYNSISVVIFHFSWKMQSDVWGSLSDQGVVTHITGGNFAQSSITINGWLRDFLWAQASQVIQSYGSSLSAYGLFFLGAHFVWAFSLMFLFSGRGYWQELIESIVWAHNKLKVAPATQPRALSIVQGRAVGVTHYLLGGIATTWAFFLARIIAVG.

A run of 8 helical transmembrane segments spans residues 70–93, 156–179, 195–219, 291–309, 346–369, 385–411, 433–455, and 531–549; these read VFSA…FHGA, LYCT…FHYH, LNHH…HVSL, IAHH…GHMY, WHAQ…HHMY, LSLF…IFMV, AIIS…LYIH, and FLVH…LILL. The [4Fe-4S] cluster site is built by Cys573 and Cys582. 2 helical membrane passes run 589 to 610 and 664 to 686; these read HVFL…HFSW and LSAY…MFLF. Residue His675 participates in chlorophyll a' binding. Chlorophyll a is bound by residues Met683 and Tyr691. Trp692 is a binding site for phylloquinone. The chain crosses the membrane as a helical span at residues 724-744; sequence AVGVTHYLLGGIATTWAFFLA.

Belongs to the PsaA/PsaB family. In terms of assembly, the PsaA/B heterodimer binds the P700 chlorophyll special pair and subsequent electron acceptors. PSI consists of a core antenna complex that captures photons, and an electron transfer chain that converts photonic excitation into a charge separation. The eukaryotic PSI reaction center is composed of at least 11 subunits. P700 is a chlorophyll a/chlorophyll a' dimer, A0 is one or more chlorophyll a, A1 is one or both phylloquinones and FX is a shared 4Fe-4S iron-sulfur center. serves as cofactor.

It localises to the plastid. The protein resides in the chloroplast thylakoid membrane. It carries out the reaction reduced [plastocyanin] + hnu + oxidized [2Fe-2S]-[ferredoxin] = oxidized [plastocyanin] + reduced [2Fe-2S]-[ferredoxin]. Functionally, psaA and PsaB bind P700, the primary electron donor of photosystem I (PSI), as well as the electron acceptors A0, A1 and FX. PSI is a plastocyanin-ferredoxin oxidoreductase, converting photonic excitation into a charge separation, which transfers an electron from the donor P700 chlorophyll pair to the spectroscopically characterized acceptors A0, A1, FX, FA and FB in turn. Oxidized P700 is reduced on the lumenal side of the thylakoid membrane by plastocyanin. This Jasminum nudiflorum (Winter jasmine) protein is Photosystem I P700 chlorophyll a apoprotein A1.